Reading from the N-terminus, the 351-residue chain is Putative aminodehydroquinate synthase (351 aa).

Residues 65–68, 97–101, 121–122, Lys-134, Lys-143, and 161–164 contribute to the NAD(+) site; these read EPTK, GTTTD, TS, and YLTT. Residues Glu-176, His-225, and His-241 each coordinate Zn(2+).

It belongs to the sugar phosphate cyclases superfamily. aDHQS family. NAD(+) is required as a cofactor. The cofactor is Co(2+). Zn(2+) serves as cofactor.

In terms of biological role, may catalyze the conversion of 3,4-dideoxy-4-amino-D-arabino-heptulosonate 7-phosphate (aDAHP) to 5-deoxy-5-amino-3-dehydroquinate (aDHQ). Probably involved in the formation of 3-amino-5-hydroxybenzoic acid (AHBA), the precursor of rifamycin and related ansamycins. In Amycolatopsis mediterranei (strain S699) (Nocardia mediterranei), this protein is Putative aminodehydroquinate synthase.